The following is a 633-amino-acid chain: Leucine-rich repeat and IQ domain-containing protein 3 (633 aa).

LRR repeat units follow at residues 51–72, 73–94, and 98–119; these read SLRV…QSCK, KLIK…NFWS, and NLKL…CVLS. The 48-residue stretch at 132–179 folds into the LRRCT domain; sequence CPVSLKKGYRHVLVNSIWPLKALDHHVISDEEIIQNWRLPERFKTFSP. The region spanning 215–244 is the IQ domain; it reads HNSPVLIIQRWIRGFIVRKHLSPYFKHKKH. The segment at 324 to 343 is disordered; sequence SKQPRHHIHKGQKAMKAESE. A compositionally biased stretch (basic residues) spans 325–336; sequence KQPRHHIHKGQK. Residues 556 to 617 adopt a coiled-coil conformation; sequence IEKWEEQKYK…AKVEYIKTFY (62 aa).

In Mus musculus (Mouse), this protein is Leucine-rich repeat and IQ domain-containing protein 3 (Lrriq3).